Reading from the N-terminus, the 148-residue chain is Large ribosomal subunit protein uL15 (148 aa).

Residues 1-51 (MNLSNLKPAEGSTKTRKRIGRGPGSGLGGTSTRGHKGAKSRSGYKNKIGFE) form a disordered region. The span at 21 to 31 (RGPGSGLGGTS) shows a compositional bias: gly residues. Residues 33–44 (RGHKGAKSRSGY) are compositionally biased toward basic residues.

The protein belongs to the universal ribosomal protein uL15 family. As to quaternary structure, part of the 50S ribosomal subunit.

Functionally, binds to the 23S rRNA. This Parabacteroides distasonis (strain ATCC 8503 / DSM 20701 / CIP 104284 / JCM 5825 / NCTC 11152) protein is Large ribosomal subunit protein uL15.